Here is a 149-residue protein sequence, read N- to C-terminus: Large ribosomal subunit protein uL22 (149 aa).

This sequence belongs to the universal ribosomal protein uL22 family. As to quaternary structure, part of the 50S ribosomal subunit.

In terms of biological role, this protein binds specifically to 23S rRNA. It makes multiple contacts with different domains of the 23S rRNA in the assembled 50S subunit and ribosome. The globular domain of the protein is located near the polypeptide exit tunnel on the outside of the subunit, while an extended beta-hairpin is found that lines the wall of the exit tunnel in the center of the 70S ribosome. The polypeptide is Large ribosomal subunit protein uL22 (Picrophilus torridus (strain ATCC 700027 / DSM 9790 / JCM 10055 / NBRC 100828 / KAW 2/3)).